Consider the following 24-residue polypeptide: Arginine attenuator peptide (24 aa).

The protein belongs to the arginine attenuator peptide family.

Functionally, arginine attenuator peptide (AAP) that has a regulatory role in the production of arginine-specific carbamoyl phosphate synthetase. Encoded by an upstream open reading frame (uORF) within the 5'-leader region of arginine-specific carbamoyl phosphate synthetase small chain (arg-2) mRNA, it attenuates the translation of the downstream arg-2 ORF. In the presence of high concentrations of arginine, ribosomes translating the uORF encoding AAP stall at the termination codon, resulting in reduced translation from the downstream arg-2 initiation codon. The chain is Arginine attenuator peptide from Neurospora crassa (strain ATCC 24698 / 74-OR23-1A / CBS 708.71 / DSM 1257 / FGSC 987).